Here is a 542-residue protein sequence, read N- to C-terminus: Phosphoglucomutase (542 aa).

Residues Thr17, Arg21, 112-113 (SH), and Lys125 contribute to the substrate site. Catalysis depends on Ser112, which acts as the Phosphoserine intermediate. Residue Ser112 coordinates Mg(2+). Mg(2+)-binding residues include Asp276, Asp278, and Asp280. Substrate contacts are provided by residues 280-281 (DR), Thr343, 362-364 (EES), Lys375, and Arg495.

Belongs to the phosphohexose mutase family. Mg(2+) is required as a cofactor.

It carries out the reaction alpha-D-glucose 1-phosphate = alpha-D-glucose 6-phosphate. Its function is as follows. This enzyme participates in both the breakdown and synthesis of glucose. Required for the synthesis of capsular polysaccharide and normal lipopolysaccharide. In Rhizobium radiobacter (Agrobacterium tumefaciens), this protein is Phosphoglucomutase (pgm).